The primary structure comprises 290 residues: Poly-beta-1,6-N-acetyl-D-glucosamine N-deacetylase (290 aa).

A signal peptide spans 1–28; that stretch reads MKYRKLIILVLSILIILPVSTLDGHHIA. Residues 114–290 form the NodB homology domain; the sequence is RSVWINFDDM…KRWDGFHEKD (177 aa).

It belongs to the polysaccharide deacetylase family.

The protein localises to the secreted. The protein resides in the cell wall. Functionally, catalyzes the N-deacetylation of poly-beta-1,6-N-acetyl-D-glucosamine (PNAG, also referred to as PIA), a biofilm adhesin polysaccharide. N-deacetylation is crucial for attachment of the polysaccharide to the bacterial cell surface; it leads to the introduction of positive charges in the otherwise neutral PIA polymer, allowing electrostatic interactions. The polypeptide is Poly-beta-1,6-N-acetyl-D-glucosamine N-deacetylase (icaB) (Staphylococcus aureus (strain MRSA252)).